The primary structure comprises 370 residues: Dihydroorotate dehydrogenase (370 aa).

Residues Lys-82, 135-139 (NSFGM), and Asn-200 each bind substrate. 82 to 83 (KT) contributes to the FMN binding site. Residue Asn-200 participates in FMN binding. The active-site Nucleophile is Cys-203. Lys-241 and Ile-269 together coordinate FMN. 270 to 271 (NT) provides a ligand contact to substrate. FMN-binding positions include Gly-297, 328–329 (GG), and 350–351 (AT).

It belongs to the dihydroorotate dehydrogenase family. The cofactor is FMN.

The catalysed reaction is (S)-dihydroorotate + A = orotate + AH2. The protein operates within pyrimidine metabolism; UMP biosynthesis via de novo pathway. Catalyzes the conversion of dihydroorotate to orotate. Participates in the pyrimidine biosynthetic pathway. This is Dihydroorotate dehydrogenase (pyr4) from Dictyostelium discoideum (Social amoeba).